The sequence spans 891 residues: Alanine--tRNA ligase (891 aa).

Positions 564, 568, 677, and 681 each coordinate Zn(2+).

It belongs to the class-II aminoacyl-tRNA synthetase family. The cofactor is Zn(2+).

The protein resides in the cytoplasm. It catalyses the reaction tRNA(Ala) + L-alanine + ATP = L-alanyl-tRNA(Ala) + AMP + diphosphate. Its function is as follows. Catalyzes the attachment of alanine to tRNA(Ala) in a two-step reaction: alanine is first activated by ATP to form Ala-AMP and then transferred to the acceptor end of tRNA(Ala). Also edits incorrectly charged Ser-tRNA(Ala) and Gly-tRNA(Ala) via its editing domain. This Rhodopseudomonas palustris (strain HaA2) protein is Alanine--tRNA ligase.